Reading from the N-terminus, the 1068-residue chain is MVSSDRPVSLEDEVSHSMKEMIGGCCVCSDERGWAENPLVYCDGHGCSVAVHQACYGIVQVPTGPWFCRKCESQERAARVRCELCPHKDGALKRTDNGGWAHVVCALYIPEVQFANVSTMEPIVLQSVPHDRYNKTCYICDEQGRESKAATGACMTCNKHGCRQAFHVTCAQFAGLLCEEEGNGADNVQYCGYCKYHFSKLKKSKRGSNRSYDQSLSDSSSHSQDKHHEKEKKKYKEKDKHKQKHKKQPEPSPALVPSLTVTTEKTYTSTSNNSISGSLKRLEDTTARFTNANFQEVSAHTSSGKDVSETRGSEGKGKKSSAHSSGQRGRKPGGGRNPGTTVSAASPFPQGSFSGTPGSVKSSSGSSVQSPQDFLSFTDSDLRNDSYSHSQQSSATKDVHKGESGSQEGGVNSFSTLIGLPSTSAVTSQPKSFENSPGDLGNSSLPTAGYKRAQTSGIEEETVKEKKRKGNKQSKHGPGRPKGNKNQENVSHLSVSSASPTSSVASAAGSITSSSLQKSPTLLRNGSLQSLSVGSSPVGSEISMQYRHDGACPTTTFSELLNAIHNGIYNSNDVAVSFPNVVSGSGSSTPVSSSHLPQQSSGHLQQVGALSPSAVSSAAPAVATTQANTLSGSSLSQAPSHMYGNRSNSSMAALIAQSENNQTDQDLGDNSRNLVGRGSSPRGSLSPRSPVSSLQIRYDQPGNSSLENLPPVAASIEQLLERQWSEGQQFLLEQGTPSDILGMLKSLHQLQVENRRLEEQIKNLTAKKERLQLLNAQLSVPFPTITANPSPSHQIHTFSAQTAPTTDSLNSSKSPHIGNSFLPDNSLPVLNQDLTSSGQSTSSSSALSTPPPAGQSPAQQGSGVSGVQQVNGVTVGALASGMQPVTSTIPAVSAVGGIIGALPGNQLAINGIVGALNGVMQTPVTMSQNPTPLTHTTVPPNATHPMPATLTNSASGLGLLSDQQRQILIHQQQFQQLLNSQQLTPEQHQAFLYQLMQHHHQQHHQPELQQLQIPGPTQIPINNLLAGTQAPPLHTATTNPFLTIHGDNASQKVARLSDKTGPVAQEKS.

The segment at Ile-22–Gln-74 adopts a PHD-type 1 zinc-finger fold. The C2HC pre-PHD-type zinc-finger motif lies at Arg-79–Val-112. Residues Val-80–Ala-287 are self-association. The tract at residues Ala-106–Tyr-190 is required for interaction with histone H3. A PHD-type 2 zinc finger spans residues Lys-135–Phe-198. Positions Asp-141 to Lys-233 are interaction with FSTL3. Residues Arg-206–Thr-260 are disordered. The segment covering Ser-211–His-222 has biased composition (low complexity). Residue Ser-217 is modified to Phosphoserine. Basic and acidic residues predominate over residues Ser-223–Lys-240. Ser-252 bears the Phosphoserine mark. A Glycyl lysine isopeptide (Lys-Gly) (interchain with G-Cter in SUMO2) cross-link involves residue Lys-280. A compositionally biased stretch (polar residues) spans Asn-291 to Lys-305. The interval Asn-291–Ala-505 is disordered. Positions Asp-306 to Gly-317 are enriched in basic and acidic residues. The tract at residues Arg-311–Leu-674 is DNA-binding. The segment covering Ser-352–Gln-372 has biased composition (low complexity). Composition is skewed to polar residues over residues Tyr-387 to Thr-396 and Ser-404 to Pro-446. Ser-436 is subject to Phosphoserine. The span at Glu-465–Gly-483 shows a compositional bias: basic residues. Over residues Val-490–Ala-505 the composition is skewed to low complexity. Ser-532 is subject to Phosphoserine. Residues Ser-583 to Ser-594 are compositionally biased toward low complexity. 2 disordered regions span residues Ser-583–Pro-612 and Asn-660–Asn-708. 2 stretches are compositionally biased toward polar residues: residues His-595–Leu-604 and Asn-660–Asn-673. Residues Leu-674 to Leu-694 show a composition bias toward low complexity. Residues Ser-684, Ser-686, and Ser-689 each carry the phosphoserine modification. The tract at residues Asn-703–Thr-784 is transactivation domain; required for DOT1L-binding. The leucine-zipper stretch occupies residues Leu-750 to Leu-778. The span at Ala-800 to Ser-814 shows a compositional bias: polar residues. Positions Ala-800 to Ser-865 are disordered. Composition is skewed to low complexity over residues Leu-834 to Ser-848 and Gln-855 to Ser-865.

As to quaternary structure, self-associates. Interacts with FSTL3 isoform 2; the interaction enhances MLLT10 in vitro transcriptional activity and self-association. Interacts with YEATS4. Interacts with SS18. Interacts with DOT1L; this interaction also occurs with the KMT2A/MLL1 fusion protein. Interacts with histone H3; interaction is necessary for MLLT10 binding to nucleosomes; interaction is inhibited by histone H3 'Lys-27' methylations (H3K27me1, H3K27me2 and H3K27me3) amd acetylation; interaction stabilizes association of MLLT10 at chromatin; interaction is essential for histone H3 'Lys-79' dimethylation (H3K79me2). As to expression, expressed abundantly in testis.

Its subcellular location is the nucleus. Probably involved in transcriptional regulation. In vitro or as fusion protein with KMT2A/MLL1 has transactivation activity. Binds to cruciform DNA. In cells, binding to unmodified histone H3 regulates DOT1L functions including histone H3 'Lys-79' dimethylation (H3K79me2) and gene activation. The protein is Protein AF-10 of Homo sapiens (Human).